The chain runs to 300 residues: MNQTYGRLVSRAAIAATAMALALLLIKIFAWWYTGSVSILAALVDSLVDIAASLTNLLVVRYSLQPADDEHTFGHGKAESLAALAQSMFISGSALFLFLTSIQNLIKPTPMNDPGVGIGVTVIALICTIILVTFQRWVVRKTQSQAVRADMLHYQSDVMMNGAILIALGLSWYGWHRADALFALGIGIYILYSALRMGYEAVQSLLDRALPDAERQEIIDIVTSWPGVSGAHDLRTRQSGPTRFIQIHLEMEDNLPLVQAHLVAEQVEQAILRRFPGSDVIIHQDPCSVVPREIKKFELV.

The next 4 membrane-spanning stretches (helical) occupy residues 12-32 (AAIA…FAWW), 39-59 (ILAA…NLLV), 82-102 (AALA…LTSI), and 114-134 (PGVG…LVTF). Residues Asp45 and Asp49 each coordinate Zn(2+). Zn(2+) is bound by residues His153 and Asp157. The next 2 helical transmembrane spans lie at 156-176 (SDVM…YGWH) and 178-198 (ADAL…LRMG).

Belongs to the cation diffusion facilitator (CDF) transporter (TC 2.A.4) family. FieF subfamily. As to quaternary structure, homodimer.

It is found in the cell inner membrane. The enzyme catalyses Zn(2+)(in) + H(+)(out) = Zn(2+)(out) + H(+)(in). The catalysed reaction is Cd(2+)(in) + H(+)(out) = Cd(2+)(out) + H(+)(in). It catalyses the reaction Fe(2+)(in) + H(+)(out) = Fe(2+)(out) + H(+)(in). Its function is as follows. Divalent metal cation transporter which exports Zn(2+), Cd(2+) and possibly Fe(2+). May be involved in zinc and iron detoxification by efflux. The sequence is that of Cation-efflux pump FieF from Salmonella arizonae (strain ATCC BAA-731 / CDC346-86 / RSK2980).